We begin with the raw amino-acid sequence, 164 residues long: Protein-export protein SecB (164 aa).

This sequence belongs to the SecB family. As to quaternary structure, homotetramer, a dimer of dimers. One homotetramer interacts with 1 SecA dimer.

The protein resides in the cytoplasm. Functionally, one of the proteins required for the normal export of preproteins out of the cell cytoplasm. It is a molecular chaperone that binds to a subset of precursor proteins, maintaining them in a translocation-competent state. It also specifically binds to its receptor SecA. This is Protein-export protein SecB from Pseudomonas syringae pv. tomato (strain ATCC BAA-871 / DC3000).